Consider the following 231-residue polypeptide: Quercetin 2,3-dioxygenase (231 aa).

Residues H57, H59, H101, and E103 each contribute to the a divalent metal cation site.

This sequence belongs to the pirin family. It depends on Zn(2+) as a cofactor. Requires Co(2+) as cofactor. Fe(2+) is required as a cofactor.

It catalyses the reaction quercetin + O2 = 2-(3,4-dihydroxybenzoyloxy)-4,6-dihydroxybenzoate + CO. The protein operates within flavonoid metabolism; quercetin degradation. With respect to regulation, inhibited by kojic acid, sodium diethyldithiocarbamate and 1,10-phenanthroline monohydrochloride. Has quercetin 2,3-dioxygenase activity in vitro. Its physiological role is unknown; however, may provide a mechanism that would avoid inhibition of key cellular proteins, such as DNA gyrase, by quercetin. The chain is Quercetin 2,3-dioxygenase (yhhW) from Escherichia coli (strain K12).